A 388-amino-acid polypeptide reads, in one-letter code: Proline-rich protein 5 (388 aa).

2 interaction with RICTOR regions span residues 10 to 95 (MSSP…LTKG) and 188 to 218 (HESR…YGLH). The tract at residues 12–31 (SPSLSDLGKREPAAAADERG) is disordered. Residues 18 to 31 (LGKREPAAAADERG) show a composition bias toward basic and acidic residues. Serine 252 carries the phosphoserine modification. The interval 254-388 (SYNTPLLNPV…EGSGGRQSVV (135 aa)) is disordered. A compositionally biased stretch (polar residues) spans 336 to 346 (TRSSLPRSSPE).

Belongs to the PROTOR family. In terms of assembly, associated component of the mechanistic target of rapamycin complex 2 (mTORC2). Binds directly to MTOR and RICTOR within the TORC2 complex. As to expression, most abundant in kidney and liver. Also highly expressed in brain, spleen, testis and placenta. Overexpressed in several colorectal tumors.

Associated subunit of mTORC2, which regulates cell growth and survival in response to hormonal signals. mTORC2 is activated by growth factors, but, in contrast to mTORC1, seems to be nutrient-insensitive. mTORC2 seems to function upstream of Rho GTPases to regulate the actin cytoskeleton, probably by activating one or more Rho-type guanine nucleotide exchange factors. PRR5 plays an important role in regulation of PDGFRB expression and in modulation of platelet-derived growth factor signaling. May act as a tumor suppressor in breast cancer. The protein is Proline-rich protein 5 (PRR5) of Homo sapiens (Human).